Here is a 623-residue protein sequence, read N- to C-terminus: MLLAQVNRDTQGMEFQSVDGDPQQVTLCLTEAVTVADDNIDGMDTVSLQAVTLVDGSTAYIQHSPKVSLTENKIMEGQVIQLEDGSAAYVQHLPMSKTGGEGLRLEDGQAVQLEDGTTAYIHAPKETYDQGGLQAVQLEDGTTAYIQHMPQSNTILAIQADGTVADLQTEGTIDAETISVLEQYSTKMEATECGTGLIGRGDSDGVHMQIVLQGQDCRSPRIQHVGEKAFRCEHEGCGKLYTTAHHLKVHERSHTGDKPYICDHLGCGKKFATGYGLKSHVRTHTGEKPYRCQELNCLKSFKTSGDLQKHTRTHTGEKPFKCPFEGCGRSFTTSNIRKVHIRTHTGERPYYCAEPNCGRAFASATNYKNHMRIHTGEKPYVCTVPGCDKRFTEYSSLYKHHVVHTPCKPYNCNHCGKTYKQISTLAMHKRTAHNDTEPIEEEQEGYFEPPAEAIDDPGLMYTPSVVDDDSGSEQVSGSEIMGQHHVALISQDGTQQVLSQADMQAMGGTITMVTQEGTTITIPAHEAMLSSGGAHSVTMVSADGTEGQVAIVTPDLAAYQTEEGELIQDQEQHEVSTSPHPVTLLATSNGTHIAVQLSDHPSLEEAIRIASRIQQGETPGMDD.

7 C2H2-type zinc fingers span residues 230–254 (FRCE…ERSH), 260–284 (YICD…VRTH), 290–314 (YRCQ…TRTH), 320–344 (FKCP…IRTH), 350–374 (YYCA…MRIH), 380–404 (YVCT…HVVH), and 410–433 (YNCN…RTAH).

This sequence belongs to the GLI C2H2-type zinc-finger protein family.

Its subcellular location is the nucleus. In terms of biological role, transcriptional activator. Activates the gene for selenocysteine tRNA (tRNAsec). Binds to the activator element (AE) motif of the selenocysteine tRNA gene promoter. The protein is Zinc finger protein 143 (znf143) of Danio rerio (Zebrafish).